Consider the following 62-residue polypeptide: Photosystem II reaction center protein Z (62 aa).

2 helical membrane-spanning segments follow: residues 8-28 and 41-61; these read ALISLVLVSFVLVVGVPVAYA and WLGSGVWIALVLLVGLLNFFV.

The protein belongs to the PsbZ family. PSII is composed of 1 copy each of membrane proteins PsbA, PsbB, PsbC, PsbD, PsbE, PsbF, PsbH, PsbI, PsbJ, PsbK, PsbL, PsbM, PsbT, PsbX, PsbY, PsbZ, Psb30/Ycf12, peripheral proteins PsbO, CyanoQ (PsbQ), PsbU, PsbV and a large number of cofactors. It forms dimeric complexes.

Its subcellular location is the cellular thylakoid membrane. Its function is as follows. May control the interaction of photosystem II (PSII) cores with the light-harvesting antenna, regulates electron flow through the 2 photosystem reaction centers. PSII is a light-driven water plastoquinone oxidoreductase, using light energy to abstract electrons from H(2)O, generating a proton gradient subsequently used for ATP formation. This chain is Photosystem II reaction center protein Z, found in Trichormus variabilis (strain ATCC 29413 / PCC 7937) (Anabaena variabilis).